The chain runs to 441 residues: Serine/threonine-protein phosphatase 2A activator 1 (441 aa).

Composition is skewed to polar residues over residues Asn-66–Ser-75 and Gln-421–Arg-432. Disordered regions lie at residues Asn-66–Gln-100 and Gln-421–Asn-441.

It belongs to the PTPA-type PPIase family.

The protein resides in the cytoplasm. It localises to the nucleus. It catalyses the reaction [protein]-peptidylproline (omega=180) = [protein]-peptidylproline (omega=0). Functionally, PPIases accelerate the folding of proteins. It catalyzes the cis-trans isomerization of proline imidic peptide bonds in oligopeptides. Acts as a regulatory subunit for PP2A-like phosphatases modulating their activity or substrate specificity, probably by inducing a conformational change in the catalytic subunit, a direct target of the PPIase. Can reactivate inactive phosphatase PP2A-phosphatase methylesterase complexes (PP2Ai) in presence of ATP and Mg(2+) by dissociating the inactive form from the complex. The sequence is that of Serine/threonine-protein phosphatase 2A activator 1 (RRD1) from Debaryomyces hansenii (strain ATCC 36239 / CBS 767 / BCRC 21394 / JCM 1990 / NBRC 0083 / IGC 2968) (Yeast).